The following is a 663-amino-acid chain: Sodium/potassium/calcium exchanger 1 (663 aa).

The Extracellular portion of the chain corresponds to Ser32–Gln128. N-linked (GlcNAc...) asparagine glycosylation is found at Asn59, Asn66, and Asn100. Residues Gly129–Cys149 traverse the membrane as a helical segment. The Cytoplasmic portion of the chain corresponds to Asp150–Ala173. The stretch at Val170–Phe210 is one Alpha-1 repeat. A helical membrane pass occupies residues Thr174–Ile194. Topologically, residues Ser195–Gly200 are extracellular. A helical membrane pass occupies residues Ile201–Leu221. Over Phe222 to His228 the chain is Cytoplasmic. The helical transmembrane segment at Leu229 to Leu253 threads the bilayer. The Extracellular portion of the chain corresponds to Asp254–Trp259. Residues Trp260–Met276 form a helical membrane-spanning segment. Residues Lys277–Lys471 lie on the Cytoplasmic side of the membrane. Disordered stretches follow at residues Lys308–Asn343 and Leu384–Trp465. Residues Asp316–Lys325 are compositionally biased toward basic and acidic residues. Polar residues-rich tracts occupy residues Gln327–Asn343 and Ala399–Ser412. Ser337 is modified (phosphoserine). A compositionally biased stretch (basic and acidic residues) spans Glu413–Thr423. Positions Asp434–Leu461 are enriched in acidic residues. The chain crosses the membrane as a helical span at residues Gln472–Val492. Residues Arg493–Lys499 are Extracellular-facing. Residues Phe500–Val520 form a helical membrane-spanning segment. The Cytoplasmic portion of the chain corresponds to Trp521 to Glu535. A helical transmembrane segment spans residues Ile536–Ile556. An Alpha-2 repeat occupies Ala543 to Asn574. At Val557–Asn574 the chain is on the extracellular side. Residues Ile575–Phe595 form a helical membrane-spanning segment. Over Ser596–Gly604 the chain is Cytoplasmic. A helical transmembrane segment spans residues Leu605 to Leu625. The Extracellular portion of the chain corresponds to Cys626–Lys632. Residues Ile633–Glu653 form a helical membrane-spanning segment. At Asp654–Val663 the chain is on the cytoplasmic side.

This sequence belongs to the Ca(2+):cation antiporter (CaCA) (TC 2.A.19) family. SLC24A subfamily. In terms of processing, the uncleaved signal sequence is required for efficient membrane targeting and proper membrane integration and topology. In terms of tissue distribution, retinal rods. Localizes to the inner segment of rod photoreceptors.

It localises to the cell membrane. The enzyme catalyses Ca(2+)(out) + K(+)(out) + 4 Na(+)(in) = Ca(2+)(in) + K(+)(in) + 4 Na(+)(out). Its function is as follows. Calcium, potassium:sodium antiporter that transports 1 Ca(2+) and 1 K(+) in exchange for 4 Na(+). Critical component of the visual transduction cascade, controlling the calcium concentration of outer segments during light and darkness. Light causes a rapid lowering of cytosolic free calcium in the outer segment of both retinal rod and cone photoreceptors and the light-induced lowering of calcium is caused by extrusion via this protein which plays a key role in the process of light adaptation. The protein is Sodium/potassium/calcium exchanger 1 (SLC24A1) of Gallus gallus (Chicken).